The primary structure comprises 286 residues: 4-diphosphocytidyl-2-C-methyl-D-erythritol kinase (286 aa).

Residue K11 is part of the active site. ATP is bound at residue 94-104; the sequence is PMGGGIGGGSS. D136 is an active-site residue.

This sequence belongs to the GHMP kinase family. IspE subfamily.

The catalysed reaction is 4-CDP-2-C-methyl-D-erythritol + ATP = 4-CDP-2-C-methyl-D-erythritol 2-phosphate + ADP + H(+). The protein operates within isoprenoid biosynthesis; isopentenyl diphosphate biosynthesis via DXP pathway; isopentenyl diphosphate from 1-deoxy-D-xylulose 5-phosphate: step 3/6. Functionally, catalyzes the phosphorylation of the position 2 hydroxy group of 4-diphosphocytidyl-2C-methyl-D-erythritol. The polypeptide is 4-diphosphocytidyl-2-C-methyl-D-erythritol kinase (Pseudomonas putida (strain ATCC 700007 / DSM 6899 / JCM 31910 / BCRC 17059 / LMG 24140 / F1)).